The sequence spans 629 residues: Forkhead box protein O1-B (629 aa).

Disordered stretches follow at residues 1–54 (MAEP…PEQG), 88–134 (CAHP…SRRN), 211–308 (SWWM…SPFL), and 359–397 (KNNT…QPQV). Over residues 36-46 (QPGNSNTSSPA) the composition is skewed to polar residues. Low complexity-rich tracts occupy residues 90–107 (HPQQ…THPQ) and 115–133 (PASG…SSRR). Positions 136–230 (WGNMSYADLI…KSGKSPRRRA (95 aa)) form a DNA-binding region, fork-head. Residues 240-251 (TKSRGRAAKKKM) show a composition bias toward basic residues. 3 stretches are compositionally biased toward polar residues: residues 291–302 (TRASSDASTLSG), 359–377 (KNNT…SPLM), and 385–397 (SYTS…QPQV).

It localises to the cytoplasm. Its subcellular location is the nucleus. In terms of biological role, transcription factor that regulates metabolic homeostasis in response to oxidative stress. Binds to the consensus sequence 5'-TT[G/A]TTTTG-3' and the related Daf-16 family binding element (DBE) with consensus sequence 5'-TT[G/A]TTTAC-3'. Main regulator of redox balance and osteoblast numbers and controls bone mass. Orchestrates the endocrine function of the skeleton in regulating glucose metabolism. May act as a positive regulator of apoptosis in cardiac smooth muscle cells as a result of its transcriptional activation of pro-apoptotic genes. This is Forkhead box protein O1-B (foxo1b) from Danio rerio (Zebrafish).